We begin with the raw amino-acid sequence, 81 residues long: Mu/omega-theraphotoxin-Hs1a (81 aa).

The signal sequence occupies residues 1-21 (MRASMFLALAGLVLLFVVCYA). Residues 22-48 (SESEEKEFPRELLFKFFAVDDFKGEER) constitute a propeptide that is removed on maturation. 3 cysteine pairs are disulfide-bonded: Cys-50/Cys-65, Cys-57/Cys-70, and Cys-64/Cys-77.

This sequence belongs to the neurotoxin 10 (Hwtx-1) family. 23 (HwTx-I) subfamily. In terms of tissue distribution, expressed by the venom gland.

The protein resides in the secreted. In terms of biological role, lethal toxin with multiple biological activities. Inhibits voltage-gated TTX-sensitive sodium channels in DRG neurons (IC(50)=55 nM) and also shows activity when directly tested on Nav1.7/SCN9A (IC(50)=25.1-630 nM). Inhibits N-type calcium channels (Cav2.2/CACNA1B (IC(50)=100 nM)). Also blocks neuromuscular transmission. In vivo, intrathecal injected toxin shows analgesic activity in the rat formalin-induced pain model, without induction of motor dysfunction in rats. The chain is Mu/omega-theraphotoxin-Hs1a from Cyriopagopus schmidti (Chinese bird spider).